A 293-amino-acid chain; its full sequence is Aspartate carbamoyltransferase catalytic subunit (293 aa).

Residues arginine 50 and threonine 51 each contribute to the carbamoyl phosphate site. L-aspartate is bound at residue lysine 78. Residues arginine 100, histidine 127, and glutamine 130 each contribute to the carbamoyl phosphate site. Positions 160 and 210 each coordinate L-aspartate. Positions 253 and 254 each coordinate carbamoyl phosphate.

It belongs to the aspartate/ornithine carbamoyltransferase superfamily. ATCase family. As to quaternary structure, heterododecamer (2C3:3R2) of six catalytic PyrB chains organized as two trimers (C3), and six regulatory PyrI chains organized as three dimers (R2).

The enzyme catalyses carbamoyl phosphate + L-aspartate = N-carbamoyl-L-aspartate + phosphate + H(+). Its pathway is pyrimidine metabolism; UMP biosynthesis via de novo pathway; (S)-dihydroorotate from bicarbonate: step 2/3. Functionally, catalyzes the condensation of carbamoyl phosphate and aspartate to form carbamoyl aspartate and inorganic phosphate, the committed step in the de novo pyrimidine nucleotide biosynthesis pathway. The sequence is that of Aspartate carbamoyltransferase catalytic subunit from Staphylococcus epidermidis (strain ATCC 35984 / DSM 28319 / BCRC 17069 / CCUG 31568 / BM 3577 / RP62A).